The following is a 513-amino-acid chain: MSDLPIINFINFNQNGTCISIGTSQGFKIFNCEPFGRFYQDDEGGCGIVEMLFSTSLLAVVGMGENPAMSPRRLRMLNTKRHSVICEVTFPTTILSIKMNKTRLAVLLQEQIYIYDISNMRLLHTIETSMNAQGLMSMSPNSENNYLVYPSPPKVINSEIKDHATTNNINIKKSDAAEDPLRKDHFAYDPSDHSHPQSTTESTSNNHNRTYSSGNNNNTNSNPNKIIKNGDVIVFNLQTLQPTMVIEAHKGEIAALKLSADGTLLATASEKGTIIRVFNVENGSKVYQFRRGTYSTKISSLSFSKDNQFLAVCSSSKTVHIFKLGEKIIDNTKPNELNSDDDMDDDLLPQFENGDDEEEVDEETLDEEATSLNSSHSNKEPIVDSSRSTVGRMIRKSSQRLSRKAAKTLGAYFPIKVSSILEPSRHFASLKISTTTNQPIKAIAAIDDPISLNTNEYPDLFDTSNQADHQNTDGLKMIPVRVLSSEGYMYKYILDPERGGDCILLEQYSLLSE.

The WD 1 repeat unit spans residues S2–Q40. Positions N167 to K225 are disordered. A compositionally biased stretch (basic and acidic residues) spans K172–H195. Residues N205 to K225 show a composition bias toward low complexity. The stretch at A248 to Q288 is one WD 2 repeat. The interval F289–G292 is necessary for proper localization to vacuole membrane. The L/FRRG motif signature appears at F289–T293. A WD 3 repeat occupies T293–T332. The disordered stretch occupies residues K333 to S398. The segment covering N338–A369 has biased composition (acidic residues).

It belongs to the WD repeat PROPPIN family. Component of the PI(3,5)P2 regulatory complex. Interacts with ATG2 and ATG9. The ATG2-ATG18 complex is essential for autophagosome formation.

Its subcellular location is the preautophagosomal structure membrane. The protein resides in the vacuole membrane. It is found in the endosome membrane. Functionally, component of the PI(3,5)P2 regulatory complex that regulates both the synthesis and turnover of phosphatidylinositol 3,5-bisphosphate (PtdIns(3,5)P2). Plays an important role in osmotically-induced vacuole fragmentation. Required for cytoplasm to vacuole transport (Cvt) vesicle formation, pexophagy and starvation-induced autophagy. Involved in correct ATG9 trafficking to the pre-autophagosomal structure. With ATG2, protects ATG8 from ATG4-mediated cleavage. This is Autophagy-related protein 18 from Kluyveromyces marxianus (strain DMKU3-1042 / BCC 29191 / NBRC 104275) (Yeast).